A 662-amino-acid polypeptide reads, in one-letter code: UvrABC system protein B (662 aa).

In terms of domain architecture, Helicase ATP-binding spans 31-188 (DNIEGGEKAQ…NDLVDIQFER (158 aa)). An ATP-binding site is contributed by 44–51 (GATGTGKT). The short motif at 97 to 120 (YYDYYQPEAYVPSSDTYIEKDSSV) is the Beta-hairpin element. In terms of domain architecture, Helicase C-terminal spans 435 to 601 (QIDDLLGEIN…TIKKEIRDLI (167 aa)). Residues 626–661 (KELVKKLEKQMQEAVEVLDFELAAQIRDMMLEVKAL) form the UVR domain.

The protein belongs to the UvrB family. Forms a heterotetramer with UvrA during the search for lesions. Interacts with UvrC in an incision complex.

Its subcellular location is the cytoplasm. In terms of biological role, the UvrABC repair system catalyzes the recognition and processing of DNA lesions. A damage recognition complex composed of 2 UvrA and 2 UvrB subunits scans DNA for abnormalities. Upon binding of the UvrA(2)B(2) complex to a putative damaged site, the DNA wraps around one UvrB monomer. DNA wrap is dependent on ATP binding by UvrB and probably causes local melting of the DNA helix, facilitating insertion of UvrB beta-hairpin between the DNA strands. Then UvrB probes one DNA strand for the presence of a lesion. If a lesion is found the UvrA subunits dissociate and the UvrB-DNA preincision complex is formed. This complex is subsequently bound by UvrC and the second UvrB is released. If no lesion is found, the DNA wraps around the other UvrB subunit that will check the other stand for damage. This chain is UvrABC system protein B, found in Streptococcus pneumoniae (strain P1031).